Consider the following 242-residue polypeptide: Probable transcriptional regulatory protein XAC3151 (242 aa).

This sequence belongs to the TACO1 family.

Its subcellular location is the cytoplasm. The protein is Probable transcriptional regulatory protein XAC3151 of Xanthomonas axonopodis pv. citri (strain 306).